We begin with the raw amino-acid sequence, 50 residues long: MMSRYAKCLKMHSVISYCVKYLKPRIFYKFGAFLTVNNKRGEGNKWKSII.

This is an uncharacterized protein from Bacillus subtilis (strain 168).